We begin with the raw amino-acid sequence, 262 residues long: pFDCC methylesterase MES16 (262 aa).

The active-site Acyl-ester intermediate is the serine 87. Residues aspartate 211 and histidine 239 each act as charge relay system in the active site.

It belongs to the AB hydrolase superfamily. Methylesterase family.

The protein resides in the cytoplasm. It catalyses the reaction methyl (indol-3-yl)acetate + H2O = (indol-3-yl)acetate + methanol + H(+). The catalysed reaction is methyl (-)-jasmonate + H2O = jasmonate + methanol + H(+). The enzyme catalyses primary fluorescent dioxobilin-type chlorophyll catabolite + H2O = O13(4)-desmethyl pFDCC + methanol + H(+). It functions in the pathway plant hormone biosynthesis. The protein operates within lipid metabolism; oxylipin biosynthesis. It participates in porphyrin-containing compound metabolism; chlorophyll degradation. Functionally, involved in the chlorophyll breakdown by its action in fluorescent chlorophyll catabolites (FCCs) demethylation. Demethylates the C13(2)-carboxymethyl group present at the isocyclic ring of chlorophyll. Uses primary fluorescent dioxobilin-type chlorophyll catabolite (pFDCC) as substrate to produce O13(4)-desmethyl pFDCC. Also able to catalyze pheophorbides in vitro. Methylesterase shown to have carboxylesterase activity, methyl indole-3-acetic acid (MeIAA) esterase activity and methyl jasmonate (MeJA) esterase activity in vitro. The chain is pFDCC methylesterase MES16 from Arabidopsis thaliana (Mouse-ear cress).